A 388-amino-acid polypeptide reads, in one-letter code: Dual-specificity RNA methyltransferase RlmN (388 aa).

E109 functions as the Proton acceptor in the catalytic mechanism. Positions 115–354 (EEDRATLCVS…TIVRKTRGDD (240 aa)) constitute a Radical SAM core domain. Residues C122 and C359 are joined by a disulfide bond. The [4Fe-4S] cluster site is built by C129, C133, and C136. S-adenosyl-L-methionine is bound by residues 183-184 (GE), S215, 237-239 (SLH), and N316. C359 serves as the catalytic S-methylcysteine intermediate.

It belongs to the radical SAM superfamily. RlmN family. The cofactor is [4Fe-4S] cluster.

The protein resides in the cytoplasm. It catalyses the reaction adenosine(2503) in 23S rRNA + 2 reduced [2Fe-2S]-[ferredoxin] + 2 S-adenosyl-L-methionine = 2-methyladenosine(2503) in 23S rRNA + 5'-deoxyadenosine + L-methionine + 2 oxidized [2Fe-2S]-[ferredoxin] + S-adenosyl-L-homocysteine. The catalysed reaction is adenosine(37) in tRNA + 2 reduced [2Fe-2S]-[ferredoxin] + 2 S-adenosyl-L-methionine = 2-methyladenosine(37) in tRNA + 5'-deoxyadenosine + L-methionine + 2 oxidized [2Fe-2S]-[ferredoxin] + S-adenosyl-L-homocysteine. Its function is as follows. Specifically methylates position 2 of adenine 2503 in 23S rRNA and position 2 of adenine 37 in tRNAs. m2A2503 modification seems to play a crucial role in the proofreading step occurring at the peptidyl transferase center and thus would serve to optimize ribosomal fidelity. The chain is Dual-specificity RNA methyltransferase RlmN from Klebsiella pneumoniae subsp. pneumoniae (strain ATCC 700721 / MGH 78578).